A 388-amino-acid chain; its full sequence is N-acetylneuraminate epimerase (388 aa).

An N-terminal signal peptide occupies residues 1–26; it reads MFSLIRAKRLAIGIAALAWSTGAVMA. 7 Kelch repeats span residues 48–92, 94–147, 149–186, 187–232, 236–285, 307–356, and 358–387; these read MAYV…AAAG, KIFA…VGLA, GRIAIFGGYNKELFDKYLADVGAIDKDKEPEAYRKLVD, SYMG…ATMG, FLLV…VAGA, ANAA…DAPG, and LLVVGGEDRDGKARKEVFLLKWDGKALSVE. Catalysis depends on E242, which acts as the Proton acceptor.

This sequence belongs to the NanM family. Homodimer.

It localises to the periplasm. It catalyses the reaction N-acetyl-alpha-neuraminate = N-acetyl-beta-neuraminate. Functionally, converts alpha-N-acetylneuranimic acid (Neu5Ac) to the beta-anomer, accelerating the equilibrium between the alpha- and beta-anomers. Probably facilitates sialidase-negative bacteria to compete successfully for limited amounts of extracellular Neu5Ac, which is likely taken up in the beta-anomer. In addition, the rapid removal of sialic acid from solution might be advantageous to the bacterium to damp down host responses. This chain is N-acetylneuraminate epimerase, found in Brucella melitensis biotype 1 (strain ATCC 23456 / CCUG 17765 / NCTC 10094 / 16M).